A 258-amino-acid chain; its full sequence is MVLIRVLANLLILQLSYAQKSSELVIGGDECNINEHRSLVAIFNSTKFFCSGTLINQEWVVTAAHCDSTNFKMKLGVHSKKVPNENEQTRNPKEKFFCPNKKKDDVLDKDIMLIKLDSPVSNSEHIAPLSLPSSPPSVGSVCHIMGWGSITPIEKTLPDVPYCANINLLDDAVCRPPYPELPATSRTLCAGILEGGKDTCRGDSGGPLICNGQFQGIVFYGAHPCGQALKPGVYTKVFDYNDWIQSIIAGNTAATCPP.

An N-terminal signal peptide occupies residues M1–A18. A propeptide spanning residues Q19–L24 is cleaved from the precursor. A Peptidase S1 domain is found at V25–A249. 6 cysteine pairs are disulfide-bonded: C31–C163, C50–C66, C98–C256, C142–C210, C174–C189, and C200–C225. N44 carries an N-linked (GlcNAc...) asparagine glycan. Active-site charge relay system residues include H65 and D110. The Charge relay system role is filled by S204.

Belongs to the peptidase S1 family. Snake venom subfamily. In terms of assembly, monomer. As to expression, expressed by the venom gland.

Its subcellular location is the secreted. Functionally, snake venom serine protease that may act in the hemostasis system of the prey. The protein is Snake venom serine proteinase 8 of Crotalus adamanteus (Eastern diamondback rattlesnake).